The chain runs to 573 residues: MTLSGKRISKGIGIGEVLCIRKNFDKIISREKIDFSQVDSEISKFNKAKSKAIEALRDLERKAMLQFGDDKKGIFEGQVLIVEDDELDELVIELIVKENYSAAYSIYLAFENLVKSVEDYKDPYLKERASDYKDIRNRLISIILGQVSDFSEINKDIILVTEELTPSDTMQFDLNYVKGFLTAVGGETSHAAILARTMGLPALVMTLSDIDALKDGDKIVIDAMSSIVIKNPSSDEINLYEGKILRQVELEKELFSLKDKDAETKDGTKVFLKANIGTPVDITYVNKYGVEGIGLFRTEFLYMRSLQPPTEDEQFETYKRVIETMEKKGVVTIRTLDVGGDKEIPYLNFKKEENPFLGFRALRMYKEYEELIQAQFNAIFRASHYGKIRVMVPMLTIYEEIETIEYFVNNAKINLKSRGLPFDENLEVGCMIEVPSAALISSKLANKLKFFSIGTNDLTQYVLAVDRGNQKISNLYDKYNPAVLKLIKKVLDDGVSSGIDVSVCGELGGDDAGALLLVGLGFRSLSMIPSATLRIKYLLKKYTIMELEELANKVLNSDSKQETLSYFDKFIGD.

Catalysis depends on H190, which acts as the Tele-phosphohistidine intermediate. Residues R297 and R334 each contribute to the phosphoenolpyruvate site. Mg(2+) is bound by residues E433 and D457. Residues 456–457 (ND) and R467 contribute to the phosphoenolpyruvate site. Catalysis depends on C504, which acts as the Proton donor.

The protein belongs to the PEP-utilizing enzyme family. Homodimer. Mg(2+) serves as cofactor.

It localises to the cytoplasm. It catalyses the reaction L-histidyl-[protein] + phosphoenolpyruvate = N(pros)-phospho-L-histidyl-[protein] + pyruvate. In terms of biological role, general (non sugar-specific) component of the phosphoenolpyruvate-dependent sugar phosphotransferase system (sugar PTS). This major carbohydrate active-transport system catalyzes the phosphorylation of incoming sugar substrates concomitantly with their translocation across the cell membrane. Enzyme I transfers the phosphoryl group from phosphoenolpyruvate (PEP) to the phosphoryl carrier protein (HPr). The sequence is that of Phosphoenolpyruvate-protein phosphotransferase (ptsI) from Borreliella burgdorferi (strain ATCC 35210 / DSM 4680 / CIP 102532 / B31) (Borrelia burgdorferi).